The following is a 1253-amino-acid chain: Pleckstrin homology-like domain family B member 2 (1253 aa).

Over residues 1–12 the composition is skewed to basic and acidic residues; that stretch reads MEEHSYIQKELD. 3 disordered regions span residues 1 to 43, 60 to 159, and 187 to 212; these read MEEH…PKKY, LTLS…KSHD, and DAGP…RKMS. Over residues 29–43 the composition is skewed to polar residues; the sequence is NDSQNMMESLSPKKY. Ser71 and Ser73 each carry phosphoserine. Polar residues predominate over residues 74–96; sequence PLGTSVRSSPSLAKIQGSKQFSY. Basic and acidic residues predominate over residues 126 to 144; sequence ADFDHYTGRDSERALRLSE. Phosphoserine occurs at positions 157, 204, 212, 242, and 245. Residues 265 to 286 are disordered; the sequence is NQLTPLSLPPRNSLGNSKRTKL. Phosphoserine occurs at positions 330, 334, 348, 351, 384, 387, 415, 420, 468, 489, and 501. Phosphothreonine is present on Thr504. Phosphoserine is present on Ser513. The disordered stretch occupies residues 525–567; sequence LSQSSASFFTPRSTRNDELLSDLTRTPPPPSSTFPKASSESSY. 2 positions are modified to phosphothreonine: Thr550 and Thr574. Coiled coils occupy residues 584 to 696 and 722 to 807; these read SQEL…LDNC and FEDL…LCNL. Thr898 carries the phosphothreonine modification. A coiled-coil region spans residues 1032–1098; that stretch reads IARIEEMERL…QKLIEKEVKI (67 aa). A PH domain is found at 1143-1246; it reads EKTCRGFLIK…WMDVIVTGAE (104 aa).

As to quaternary structure, interacts with FLNC. Interacts with AMOTL2; interaction may facilitate PHLDB2 localization to the myotube podosome cortex that surrounds the core. Part of a cortical microtubule stabilization complex (CMSC) composed of KANK1, PPFIA1, PPFIBP1, ERC1/ELKS, PHLDB2/LL5beta, CLASPs, KIF21A and possibly additional interactors; within CMSCs KANK1 and PHLDB2/LL5beta appear to be the core components for targeting of microtubule-binding proteins KIF21A and CLASPs, whereas PPFIA1, PPFIBP1 and ERC1/ELKS serve as scaffolds for protein clustering.

It is found in the cytoplasm. Its subcellular location is the cell cortex. The protein resides in the membrane. The protein localises to the cell projection. It localises to the podosome. Functionally, seems to be involved in the assembly of the postsynaptic apparatus. May play a role in acetyl-choline receptor (AChR) aggregation in the postsynaptic membrane. The chain is Pleckstrin homology-like domain family B member 2 (PHLDB2) from Homo sapiens (Human).